A 504-amino-acid polypeptide reads, in one-letter code: Maturase K (504 aa).

It belongs to the intron maturase 2 family. MatK subfamily.

It is found in the plastid. The protein localises to the chloroplast. Usually encoded in the trnK tRNA gene intron. Probably assists in splicing its own and other chloroplast group II introns. This is Maturase K from Ochroma pyramidale (Balsa).